We begin with the raw amino-acid sequence, 188 residues long: Heterodisulfide reductase subunit C-like protein (188 aa).

4Fe-4S ferredoxin-type domains follow at residues 34–64 (KELG…FEWY) and 78–109 (DELL…FEVM). Residues cysteine 44, cysteine 47, cysteine 50, cysteine 54, cysteine 89, cysteine 92, cysteine 95, and cysteine 99 each contribute to the [4Fe-4S] cluster site.

Belongs to the HdrC family. In terms of assembly, the heterodisulfide reductase is composed of three subunits; HdlA, HdlB and HdlC. It forms a complex with the F420-non-reducing hydrogenase (Mvh), which provides the reducing equivalents to the heterodisulfide reductase.

The protein resides in the cytoplasm. Its function is as follows. Has oxidoreductase activity. The Hdl and Mvh subunits may together mediate electron transfer from hydrogen to an unidentified electron acceptor on the cytoplasmic side of the membrane. The protein is Heterodisulfide reductase subunit C-like protein (hdlC) of Archaeoglobus profundus (strain DSM 5631 / JCM 9629 / NBRC 100127 / Av18).